Consider the following 155-residue polypeptide: Small ribosomal subunit protein uS7c (155 aa).

This sequence belongs to the universal ribosomal protein uS7 family. As to quaternary structure, part of the 30S ribosomal subunit.

The protein resides in the plastid. It localises to the chloroplast. Its function is as follows. One of the primary rRNA binding proteins, it binds directly to 16S rRNA where it nucleates assembly of the head domain of the 30S subunit. In Silene latifolia (White campion), this protein is Small ribosomal subunit protein uS7c (rps7).